Reading from the N-terminus, the 467-residue chain is UDP-glycosyltransferase 90A2 (467 aa).

UDP-alpha-D-glucose is bound by residues S289, 341-343, 358-366, and 380-383; these read VDQ, HCGWNSLTE, and AAEQ.

It belongs to the UDP-glycosyltransferase family.

The protein is UDP-glycosyltransferase 90A2 (UGT90A2) of Arabidopsis thaliana (Mouse-ear cress).